Here is a 333-residue protein sequence, read N- to C-terminus: Holliday junction branch migration complex subunit RuvB (333 aa).

The segment at 1 to 181 (MNDILNKEPM…FGISSHMEYY (181 aa)) is large ATPase domain (RuvB-L). ATP is bound by residues Leu-20, Arg-21, Gly-62, Lys-65, Thr-66, Thr-67, 128–130 (EDF), Arg-171, Tyr-181, and Arg-218. Position 66 (Thr-66) interacts with Mg(2+). Positions 182 to 252 (QERDLEEIVK…ITDKALTILD (71 aa)) are small ATPAse domain (RuvB-S). Residues 255–333 (AAGLDYIDQK…HLGYVYNEEE (79 aa)) are head domain (RuvB-H). DNA is bound by residues Arg-291, Arg-310, and Arg-315.

It belongs to the RuvB family. Homohexamer. Forms an RuvA(8)-RuvB(12)-Holliday junction (HJ) complex. HJ DNA is sandwiched between 2 RuvA tetramers; dsDNA enters through RuvA and exits via RuvB. An RuvB hexamer assembles on each DNA strand where it exits the tetramer. Each RuvB hexamer is contacted by two RuvA subunits (via domain III) on 2 adjacent RuvB subunits; this complex drives branch migration. In the full resolvosome a probable DNA-RuvA(4)-RuvB(12)-RuvC(2) complex forms which resolves the HJ.

Its subcellular location is the cytoplasm. The enzyme catalyses ATP + H2O = ADP + phosphate + H(+). The RuvA-RuvB-RuvC complex processes Holliday junction (HJ) DNA during genetic recombination and DNA repair, while the RuvA-RuvB complex plays an important role in the rescue of blocked DNA replication forks via replication fork reversal (RFR). RuvA specifically binds to HJ cruciform DNA, conferring on it an open structure. The RuvB hexamer acts as an ATP-dependent pump, pulling dsDNA into and through the RuvAB complex. RuvB forms 2 homohexamers on either side of HJ DNA bound by 1 or 2 RuvA tetramers; 4 subunits per hexamer contact DNA at a time. Coordinated motions by a converter formed by DNA-disengaged RuvB subunits stimulates ATP hydrolysis and nucleotide exchange. Immobilization of the converter enables RuvB to convert the ATP-contained energy into a lever motion, pulling 2 nucleotides of DNA out of the RuvA tetramer per ATP hydrolyzed, thus driving DNA branch migration. The RuvB motors rotate together with the DNA substrate, which together with the progressing nucleotide cycle form the mechanistic basis for DNA recombination by continuous HJ branch migration. Branch migration allows RuvC to scan DNA until it finds its consensus sequence, where it cleaves and resolves cruciform DNA. This is Holliday junction branch migration complex subunit RuvB from Lactococcus lactis subsp. cremoris (strain SK11).